The chain runs to 150 residues: Putative pre-16S rRNA nuclease (150 aa).

Belongs to the YqgF nuclease family.

It localises to the cytoplasm. Its function is as follows. Could be a nuclease involved in processing of the 5'-end of pre-16S rRNA. This is Putative pre-16S rRNA nuclease from Chlamydia abortus (strain DSM 27085 / S26/3) (Chlamydophila abortus).